The sequence spans 337 residues: Pyrophosphate--fructose 6-phosphate 1-phosphotransferase (337 aa).

Gly-10 is a diphosphate binding site. Asp-101 is a Mg(2+) binding site. Residues 124–126 (TID), Arg-161, 168–170 (MGR), Glu-220, Arg-257, and 263–266 (HTIR) contribute to the substrate site. The Proton acceptor role is filled by Asp-126.

It belongs to the phosphofructokinase type A (PFKA) family. Mixed-substrate PFK group III subfamily. As to quaternary structure, homodimer or homotrimer. Mg(2+) serves as cofactor.

The protein resides in the cytoplasm. It carries out the reaction beta-D-fructose 6-phosphate + diphosphate = beta-D-fructose 1,6-bisphosphate + phosphate + H(+). The protein operates within carbohydrate degradation; glycolysis; D-glyceraldehyde 3-phosphate and glycerone phosphate from D-glucose: step 3/4. Its activity is regulated as follows. Non-allosteric. Catalyzes the phosphorylation of D-fructose 6-phosphate, the first committing step of glycolysis. Uses inorganic phosphate (PPi) as phosphoryl donor instead of ATP like common ATP-dependent phosphofructokinases (ATP-PFKs), which renders the reaction reversible, and can thus function both in glycolysis and gluconeogenesis. Consistently, PPi-PFK can replace the enzymes of both the forward (ATP-PFK) and reverse (fructose-bisphosphatase (FBPase)) reactions. In Thermoproteus tenax (strain ATCC 35583 / DSM 2078 / JCM 9277 / NBRC 100435 / Kra 1), this protein is Pyrophosphate--fructose 6-phosphate 1-phosphotransferase.